The following is a 165-amino-acid chain: Glutamyl-tRNA(Gln) amidotransferase subunit F, mitochondrial (165 aa).

The N-terminal 19 residues, 1–19 (MKSILRSTTRNLITSSRRF), are a transit peptide targeting the mitochondrion.

The protein belongs to the GatF family. In terms of assembly, subunit of the heterotrimeric GatFAB amidotransferase (AdT) complex, composed of A, B and F subunits.

It is found in the mitochondrion inner membrane. The catalysed reaction is L-glutamyl-tRNA(Gln) + L-glutamine + ATP + H2O = L-glutaminyl-tRNA(Gln) + L-glutamate + ADP + phosphate + H(+). Allows the formation of correctly charged Gln-tRNA(Gln) through the transamidation of misacylated Glu-tRNA(Gln) in the mitochondria. The reaction takes place in the presence of glutamine and ATP through an activated gamma-phospho-Glu-tRNA(Gln). Required for proper protein synthesis within the mitochondrion. The chain is Glutamyl-tRNA(Gln) amidotransferase subunit F, mitochondrial from Candida albicans (strain WO-1) (Yeast).